A 144-amino-acid polypeptide reads, in one-letter code: uncharacterized protein (144 aa).

The N-acetyltransferase domain occupies 2–144 (IELDAINPNN…EDSVLLSKKL (143 aa)).

This sequence belongs to the acetyltransferase family.

The protein resides in the cytoplasm. It is found in the nucleus. This is an uncharacterized protein from Schizosaccharomyces pombe (strain 972 / ATCC 24843) (Fission yeast).